The primary structure comprises 138 residues: Basic phospholipase A2 Tpu-G6D49 (138 aa).

Positions 1–16 (MRTLWIMAVLLVGVEG) are cleaved as a signal peptide. Cystine bridges form between Cys-42–Cys-131, Cys-44–Cys-60, Cys-59–Cys-111, Cys-65–Cys-138, Cys-66–Cys-104, Cys-73–Cys-97, and Cys-91–Cys-102. Ca(2+)-binding residues include Tyr-43, Gly-45, and Gly-47. The active site involves His-63. Asp-64 contacts Ca(2+). Residue Asp-105 is part of the active site.

As to quaternary structure, monomer. The cofactor is Ca(2+). As to expression, expressed by the venom gland.

It is found in the secreted. It catalyses the reaction a 1,2-diacyl-sn-glycero-3-phosphocholine + H2O = a 1-acyl-sn-glycero-3-phosphocholine + a fatty acid + H(+). Functionally, snake venom phospholipase A2 (PLA2) that impairs hemostasis. It weakly inhibits ADP-induced platelet aggregation when tested on platelet rich plasma from human and rabbit blood (15-25% of inhibition at 5-10 ug of enzyme), and dose-dependently inhibits blood coagulation, possibly by inhibiting thrombin activation. Also induces local edema a few hours after injection in the hind foot. Exhibits high hydrolytic activities toward L-dipalmitoyl phosphatidylcholine. PLA2 catalyzes the calcium-dependent hydrolysis of the 2-acyl groups in 3-sn-phosphoglycerides. The sequence is that of Basic phospholipase A2 Tpu-G6D49 from Craspedocephalus puniceus (Flat-nosed pitviper).